Consider the following 537-residue polypeptide: CTP synthase (537 aa).

The interval 1-267 (MTNTKFVFVT…ISVLEERLFG (267 aa)) is amidoligase domain. Ser-15 contributes to the CTP binding site. Ser-15 contacts UTP. ATP is bound at residue 16 to 21 (SVGKGI). An L-glutamine-binding site is contributed by Tyr-56. Asp-73 serves as a coordination point for ATP. 2 residues coordinate Mg(2+): Asp-73 and Glu-141. CTP contacts are provided by residues 148–150 (DIE), 188–193 (KTKPTQ), and Lys-224. UTP contacts are provided by residues 188 to 193 (KTKPTQ) and Lys-224. In terms of domain architecture, Glutamine amidotransferase type-1 spans 297–535 (YVVLPDAYLS…LSEAVAKASP (239 aa)). L-glutamine is bound at residue Gly-355. Catalysis depends on Cys-382, which acts as the Nucleophile; for glutamine hydrolysis. Residues 383–386 (LGMQ), Glu-406, and Arg-463 contribute to the L-glutamine site. Residues His-508 and Glu-510 contribute to the active site.

This sequence belongs to the CTP synthase family. Homotetramer.

The enzyme catalyses UTP + L-glutamine + ATP + H2O = CTP + L-glutamate + ADP + phosphate + 2 H(+). It catalyses the reaction L-glutamine + H2O = L-glutamate + NH4(+). It carries out the reaction UTP + NH4(+) + ATP = CTP + ADP + phosphate + 2 H(+). The protein operates within pyrimidine metabolism; CTP biosynthesis via de novo pathway; CTP from UDP: step 2/2. Allosterically activated by GTP, when glutamine is the substrate; GTP has no effect on the reaction when ammonia is the substrate. The allosteric effector GTP functions by stabilizing the protein conformation that binds the tetrahedral intermediate(s) formed during glutamine hydrolysis. Inhibited by the product CTP, via allosteric rather than competitive inhibition. Functionally, catalyzes the ATP-dependent amination of UTP to CTP with either L-glutamine or ammonia as the source of nitrogen. Regulates intracellular CTP levels through interactions with the four ribonucleotide triphosphates. The sequence is that of CTP synthase from Coprothermobacter proteolyticus (strain ATCC 35245 / DSM 5265 / OCM 4 / BT).